Reading from the N-terminus, the 355-residue chain is Protein-glutamate methylesterase/protein-glutamine glutaminase (355 aa).

A Response regulatory domain is found at 3–121 (NVLVVEDSPV…HPDHEATARK (119 aa)). 4-aspartylphosphate is present on D54. Residues 154–348 (PLLNRVAPAR…AALTNLVAER (195 aa)) enclose the CheB-type methylesterase domain. Active-site residues include S170, H197, and D290.

The protein belongs to the CheB family. In terms of processing, phosphorylated by CheA. Phosphorylation of the N-terminal regulatory domain activates the methylesterase activity.

Its subcellular location is the cytoplasm. The enzyme catalyses [protein]-L-glutamate 5-O-methyl ester + H2O = L-glutamyl-[protein] + methanol + H(+). It carries out the reaction L-glutaminyl-[protein] + H2O = L-glutamyl-[protein] + NH4(+). Functionally, involved in chemotaxis. Part of a chemotaxis signal transduction system that modulates chemotaxis in response to various stimuli. Catalyzes the demethylation of specific methylglutamate residues introduced into the chemoreceptors (methyl-accepting chemotaxis proteins or MCP) by CheR. Also mediates the irreversible deamidation of specific glutamine residues to glutamic acid. The polypeptide is Protein-glutamate methylesterase/protein-glutamine glutaminase (Nitrosospira multiformis (strain ATCC 25196 / NCIMB 11849 / C 71)).